The chain runs to 340 residues: Protein-arginine kinase (340 aa).

The region spanning 21–242 is the Phosphagen kinase C-terminal domain; it reads VVLSSRIRLA…EQIIMQERVA (222 aa). ATP is bound by residues 24 to 28, histidine 79, arginine 113, 164 to 168, and 195 to 200; these read SSRIR, RASVM, and RGIYGE.

Belongs to the ATP:guanido phosphotransferase family.

It catalyses the reaction L-arginyl-[protein] + ATP = N(omega)-phospho-L-arginyl-[protein] + ADP + H(+). In terms of biological role, catalyzes the specific phosphorylation of arginine residues in proteins. The protein is Protein-arginine kinase of Listeria monocytogenes serotype 4b (strain F2365).